A 286-amino-acid chain; its full sequence is uncharacterized protein (286 aa).

It belongs to the chlamydial CPn_0389/CT_041/TC_0311 family.

This is an uncharacterized protein from Chlamydia muridarum (strain MoPn / Nigg).